A 458-amino-acid polypeptide reads, in one-letter code: Translation initiation factor eIF2B subunit gamma (458 aa).

Phosphoserine is present on Ser-291.

The protein belongs to the eIF-2B gamma/epsilon subunits family. In terms of assembly, component of the translation initiation factor 2B (eIF2B) complex which is a heterodecamer of two sets of five different subunits: alpha, beta, gamma, delta and epsilon. Subunits alpha, beta and delta comprise a regulatory subcomplex and subunits epsilon and gamma comprise a catalytic subcomplex. Within the complex, the hexameric regulatory complex resides at the center, with the two heterodimeric catalytic subcomplexes bound on opposite sides.

It localises to the cytoplasm. It is found in the cytosol. In terms of biological role, acts as a component of the translation initiation factor 2B (eIF2B) complex, which catalyzes the exchange of GDP for GTP on the eukaryotic initiation factor 2 (eIF2) complex gamma subunit. Its guanine nucleotide exchange factor activity is repressed when bound to eIF2 complex phosphorylated on the alpha subunit, thereby limiting the amount of methionyl-initiator methionine tRNA available to the ribosome and consequently global translation is repressed. This Schizosaccharomyces pombe (strain 972 / ATCC 24843) (Fission yeast) protein is Translation initiation factor eIF2B subunit gamma (tif223).